The sequence spans 895 residues: Protein translocase subunit SecA (895 aa).

ATP-binding positions include glutamine 86, 104 to 108 (GEGKT), and aspartate 494. Composition is skewed to low complexity over residues 838–849 (AAATPPGFGAPP) and 870–882 (GDAAATDADTGNR). The segment at 838–895 (AAATPPGFGAPPVRQQLQYSAPTAEGDVEVHAGDAAATDADTGNRAQRRANQRQQREV) is disordered.

The protein belongs to the SecA family. As to quaternary structure, monomer and homodimer. Part of the essential Sec protein translocation apparatus which comprises SecA, SecYEG and auxiliary proteins SecDF. Other proteins may also be involved.

It localises to the cell membrane. The protein resides in the cytoplasm. It catalyses the reaction ATP + H2O + cellular proteinSide 1 = ADP + phosphate + cellular proteinSide 2.. Its function is as follows. Part of the Sec protein translocase complex. Interacts with the SecYEG preprotein conducting channel. Has a central role in coupling the hydrolysis of ATP to the transfer of proteins into and across the cell membrane, serving as an ATP-driven molecular motor driving the stepwise translocation of polypeptide chains across the membrane. The polypeptide is Protein translocase subunit SecA (Kineococcus radiotolerans (strain ATCC BAA-149 / DSM 14245 / SRS30216)).